The primary structure comprises 308 residues: Elongation factor Ts (308 aa).

Positions 80-83 (TDFV) are involved in Mg(2+) ion dislocation from EF-Tu.

It belongs to the EF-Ts family.

Its subcellular location is the cytoplasm. In terms of biological role, associates with the EF-Tu.GDP complex and induces the exchange of GDP to GTP. It remains bound to the aminoacyl-tRNA.EF-Tu.GTP complex up to the GTP hydrolysis stage on the ribosome. This Verminephrobacter eiseniae (strain EF01-2) protein is Elongation factor Ts.